The primary structure comprises 112 residues: Small ribosomal subunit protein bS6 (112 aa).

This sequence belongs to the bacterial ribosomal protein bS6 family.

Functionally, binds together with bS18 to 16S ribosomal RNA. The sequence is that of Small ribosomal subunit protein bS6 from Hyphomonas neptunium (strain ATCC 15444).